The chain runs to 97 residues: RNA-binding protein Hfq (97 aa).

The 61-residue stretch at 10 to 70 (DPFLNALRKE…ISTIVPARSV (61 aa)) folds into the Sm domain. Residues 75 to 97 (ENRPQAAPASTLVQVETVQQPAE) form a disordered region. The segment covering 85–97 (TLVQVETVQQPAE) has biased composition (polar residues).

The protein belongs to the Hfq family. Homohexamer.

Functionally, RNA chaperone that binds small regulatory RNA (sRNAs) and mRNAs to facilitate mRNA translational regulation in response to envelope stress, environmental stress and changes in metabolite concentrations. Also binds with high specificity to tRNAs. The chain is RNA-binding protein Hfq from Neisseria meningitidis serogroup C / serotype 2a (strain ATCC 700532 / DSM 15464 / FAM18).